The chain runs to 702 residues: Kinesin-like protein KIF3A (702 aa).

Positions 14-345 constitute a Kinesin motor domain; it reads NVKVVVRCRP…LRYANRAKNI (332 aa). Residue 100-107 coordinates ATP; sequence GQTGTGKT. Residues 355-593 adopt a coiled-coil conformation; the sequence is PKDALLRQFQ…LSRELRLQML (239 aa). Disordered stretches follow at residues 372–424 and 667–702; these read KKLE…KMIE and LMKL…SLLQ. Acidic residues predominate over residues 376–400; it reads EGEEISGSDISGSEEDDDEEGEVGE. Over residues 410 to 424 the composition is skewed to basic and acidic residues; the sequence is DQAGKKKVSPDKMIE. A globular region spans residues 600 to 702; that stretch reads PRDYQEMIEN…PETVIDSLLQ (103 aa). Residues 675 to 690 show a composition bias toward basic residues; it reads TSKGKARPKTGRRKRS. Ser690 bears the Phosphoserine mark.

Belongs to the TRAFAC class myosin-kinesin ATPase superfamily. Kinesin family. Kinesin II subfamily. Heterodimer of KIF3A and KIF3B. Interacts with CIMAP3. Interacts with CLN3. Interacts with DCTN1. Interacts with FLCN. Interacts with AP3B1.

It localises to the cytoplasm. Its subcellular location is the cytoskeleton. The protein resides in the cell projection. The protein localises to the cilium. It is found in the microtubule organizing center. It localises to the centrosome. Its subcellular location is the centriole. In terms of biological role, microtubule-based anterograde translocator for membranous organelles. Plus end-directed microtubule sliding activity in vitro. Plays a role in primary cilia formation. Plays a role in centriole cohesion and subdistal appendage organization and function. Regulates the formation of the subdistal appendage via recruitment of DCTN1 to the centriole. Also required for ciliary basal feet formation and microtubule anchoring to mother centriole. In Macaca fascicularis (Crab-eating macaque), this protein is Kinesin-like protein KIF3A (KIF3A).